We begin with the raw amino-acid sequence, 419 residues long: Synaptosomal-associated protein 47 (419 aa).

T-SNARE coiled-coil homology domains follow at residues 109 to 171 and 356 to 418; these read AANP…LTEL and KDWP…MRKL.

Belongs to the SVAP1 family. As to quaternary structure, associates with the BLOC-1 complex. Interacts with BLOC1S6. Forms a complex containing SNAP47, VAMP2 and STX1A.

The protein resides in the endomembrane system. It localises to the cytoplasm. The protein localises to the perinuclear region. Its function is as follows. May play a role in intracellular membrane fusion. The chain is Synaptosomal-associated protein 47 (Snap47) from Rattus norvegicus (Rat).